The primary structure comprises 353 residues: MAVSAIGFEGFEKRLEISFSDPGLFSDPQGRGLRSLTKSQLDEILAPAECTIVSSLANEDVDSYVLSESSLFVYAYKIIIKTCGTTKLLLAIPPILKLAESISLDVRAVRYTRGSFIFPGAQSFPHRHFSEEVAVLDGFFGKLGSGSKAYIMGGSDEAQNWHVYCASADSVSPADSVYTLEMCMTGLDREKASVFFKQQTGSAAEMTVNSGIRKILPNSEICDFDFEPCGYSMNSVEGPAVSTIHITPEDGFSYASFETAGYDLKAMNLNEMVMRVLACFQPTEFSVAVHVDNASKSFEQGCLLDVKGYCCDEKSHQGLGMSGSVVYQKFVKASDCGSPRSTLKCWKDEDEEE.

Catalysis depends on residues E9 and E12. The Schiff-base intermediate with substrate; via pyruvic acid role is filled by S69. S69 is modified (pyruvic acid (Ser); by autocatalysis). C83 acts as the Proton donor; for catalytic activity in catalysis. Active-site proton acceptor; for processing activity residues include S232 and H245.

Belongs to the eukaryotic AdoMetDC family. It depends on pyruvate as a cofactor. In terms of processing, is synthesized initially as an inactive proenzyme. Formation of the active enzyme involves a self-maturation process in which the active site pyruvoyl group is generated from an internal serine residue via an autocatalytic post-translational modification. Two non-identical subunits are generated from the proenzyme in this reaction, and the pyruvate is formed at the N-terminus of the alpha chain, which is derived from the carboxyl end of the proenzyme. The post-translation cleavage follows an unusual pathway, termed non-hydrolytic serinolysis, in which the side chain hydroxyl group of the serine supplies its oxygen atom to form the C-terminus of the beta chain, while the remainder of the serine residue undergoes an oxidative deamination to produce ammonia and the pyruvoyl group blocking the N-terminus of the alpha chain.

The enzyme catalyses S-adenosyl-L-methionine + H(+) = S-adenosyl 3-(methylsulfanyl)propylamine + CO2. It functions in the pathway amine and polyamine biosynthesis; S-adenosylmethioninamine biosynthesis; S-adenosylmethioninamine from S-adenosyl-L-methionine: step 1/1. The polypeptide is S-adenosylmethionine decarboxylase proenzyme (SAMDC) (Vicia faba (Broad bean)).